A 228-amino-acid chain; its full sequence is ATP phosphoribosyltransferase (228 aa).

It belongs to the ATP phosphoribosyltransferase family. Short subfamily. In terms of assembly, heteromultimer composed of HisG and HisZ subunits.

The protein localises to the cytoplasm. The enzyme catalyses 1-(5-phospho-beta-D-ribosyl)-ATP + diphosphate = 5-phospho-alpha-D-ribose 1-diphosphate + ATP. The protein operates within amino-acid biosynthesis; L-histidine biosynthesis; L-histidine from 5-phospho-alpha-D-ribose 1-diphosphate: step 1/9. Its function is as follows. Catalyzes the condensation of ATP and 5-phosphoribose 1-diphosphate to form N'-(5'-phosphoribosyl)-ATP (PR-ATP). Has a crucial role in the pathway because the rate of histidine biosynthesis seems to be controlled primarily by regulation of HisG enzymatic activity. The protein is ATP phosphoribosyltransferase of Acinetobacter baylyi (strain ATCC 33305 / BD413 / ADP1).